The primary structure comprises 73 residues: Homeodomain-only protein (73 aa).

Positions 3–62 form a DNA-binding region, homeobox; degenerate; the sequence is TETASGPTEDQVEILEYNFNKVNKHPDPTTLCLIAAEAGLSEEETQKWFKQRLAQWRRSE.

Interacts with serum response factor (SRF). Component of a large complex containing histone deacetylases such as HDAC2. Interacts with the acetylated forms of HSPA1A and HSPA1B. Interacts with HSPA8.

It is found in the nucleus. The protein localises to the cytoplasm. In terms of biological role, atypical homeodomain protein which does not bind DNA and is required to modulate cardiac growth and development. Acts via its interaction with SRF, thereby modulating the expression of SRF-dependent cardiac-specific genes and cardiac development. Prevents SRF-dependent transcription either by inhibiting SRF binding to DNA or by recruiting histone deacetylase (HDAC) proteins that prevent transcription by SRF. Overexpression causes cardiac hypertrophy. Acts as a co-chaperone for HSPA1A and HSPA1B chaperone proteins and assists in chaperone-mediated protein refolding. The protein is Homeodomain-only protein (HOPX) of Bos taurus (Bovine).